A 529-amino-acid chain; its full sequence is Peptide chain release factor 3 (529 aa).

A tr-type G domain is found at 11–280 (NKRRTFAIIS…GLTEWAPKPQ (270 aa)). GTP is bound by residues 20-27 (SHPDAGKT), 88-92 (DTPGH), and 142-145 (NKLD).

This sequence belongs to the TRAFAC class translation factor GTPase superfamily. Classic translation factor GTPase family. PrfC subfamily.

It localises to the cytoplasm. Its function is as follows. Increases the formation of ribosomal termination complexes and stimulates activities of RF-1 and RF-2. It binds guanine nucleotides and has strong preference for UGA stop codons. It may interact directly with the ribosome. The stimulation of RF-1 and RF-2 is significantly reduced by GTP and GDP, but not by GMP. The sequence is that of Peptide chain release factor 3 from Mannheimia succiniciproducens (strain KCTC 0769BP / MBEL55E).